We begin with the raw amino-acid sequence, 446 residues long: Thymidine phosphorylase (446 aa).

The protein belongs to the thymidine/pyrimidine-nucleoside phosphorylase family. Homodimer.

The enzyme catalyses thymidine + phosphate = 2-deoxy-alpha-D-ribose 1-phosphate + thymine. It participates in pyrimidine metabolism; dTMP biosynthesis via salvage pathway; dTMP from thymine: step 1/2. In terms of biological role, the enzymes which catalyze the reversible phosphorolysis of pyrimidine nucleosides are involved in the degradation of these compounds and in their utilization as carbon and energy sources, or in the rescue of pyrimidine bases for nucleotide synthesis. The sequence is that of Thymidine phosphorylase from Psychromonas ingrahamii (strain DSM 17664 / CCUG 51855 / 37).